The primary structure comprises 434 residues: Alpha-enolase (434 aa).

Ser2 is modified (N-acetylserine). Position 40 (Ser40) interacts with Mg(2+). Position 44 is a phosphotyrosine (Tyr44). Lys60 carries the post-translational modification N6-acetyllysine; alternate. Lys60 is modified (N6-succinyllysine; alternate). Residue Lys71 is modified to N6-acetyllysine. An N6-acetyllysine; alternate modification is found at Lys89. At Lys89 the chain carries N6-succinyllysine; alternate. An N6-acetyllysine mark is found at Lys92 and Lys126. His158 and Glu167 together coordinate substrate. 2 positions are modified to N6-acetyllysine: Lys193 and Lys199. The residue at position 202 (Lys202) is an N6-acetyllysine; alternate. Lys202 is covalently cross-linked (Glycyl lysine isopeptide (Lys-Gly) (interchain with G-Cter in SUMO2); alternate). The active-site Proton donor is Glu210. Residues Lys228 and Lys233 each carry the N6-acetyllysine; alternate modification. N6-succinyllysine; alternate is present on Lys228. Position 228 is an N6-(2-hydroxyisobutyryl)lysine; alternate (Lys228). Position 233 is an N6-malonyllysine; alternate (Lys233). Residue Asp245 participates in Mg(2+) binding. Ser254 is modified (phosphoserine). An N6-acetyllysine modification is found at Lys256. Position 263 is a phosphoserine (Ser263). Lys281 bears the N6-acetyllysine; alternate mark. The residue at position 281 (Lys281) is an N6-(2-hydroxyisobutyryl)lysine; alternate. At Tyr287 the chain carries Phosphotyrosine. Position 291 is a phosphoserine (Ser291). Mg(2+) contacts are provided by Glu293 and Asp318. Residues Glu293 and Asp318 each contribute to the substrate site. 2 positions are modified to N6-acetyllysine: Lys335 and Lys343. Lys343 functions as the Proton acceptor in the catalytic mechanism. Residues 370-373 and Lys394 each bind substrate; that span reads SHRS. Residues 405-434 are required for interaction with PLG; the sequence is AKYNQILRIEEELGSKAKFAGRSFRNPLAK. At Lys406 the chain carries N6-acetyllysine. Lys420 carries the N6-acetyllysine; alternate modification. The residue at position 420 (Lys420) is an N6-succinyllysine; alternate. Residue Lys420 is modified to N6-malonyllysine; alternate.

This sequence belongs to the enolase family. In terms of assembly, mammalian enolase is composed of 3 isozyme subunits, alpha, beta and gamma, which can form homodimers or heterodimers which are cell-type and development-specific. ENO1 interacts with PLG in the neuronal plasma membrane and promotes its activation. The C-terminal lysine is required for this binding. In vitro, interacts with several glycolytic enzymes including PKM, PGM, CKM and aldolase. Also binds troponin, in vitro. Interacts with ENO4 and PGAM2. Interacts with CMTM6. Mg(2+) serves as cofactor. ISGylated. Post-translationally, lysine 2-hydroxyisobutyrylation (Khib) by p300/EP300 activates the phosphopyruvate hydratase activity. As to expression, testis. Found in the principal piece of sperm tail (at protein level). The alpha/alpha homodimer is expressed in embryo and in most adult tissues. The alpha/beta heterodimer and the beta/beta homodimer are found in striated muscle, and the alpha/gamma heterodimer and the gamma/gamma homodimer in neurons. In striated muscle, expression of ENO1 appears to be independent of fiber type.

It localises to the cytoplasm. The protein localises to the cell membrane. It catalyses the reaction (2R)-2-phosphoglycerate = phosphoenolpyruvate + H2O. Its pathway is carbohydrate degradation; glycolysis; pyruvate from D-glyceraldehyde 3-phosphate: step 4/5. Its function is as follows. Glycolytic enzyme the catalyzes the conversion of 2-phosphoglycerate to phosphoenolpyruvate. In addition to glycolysis, involved in various processes such as growth control, hypoxia tolerance and allergic responses. May also function in the intravascular and pericellular fibrinolytic system due to its ability to serve as a receptor and activator of plasminogen on the cell surface of several cell-types such as leukocytes and neurons. Stimulates immunoglobulin production. This Mus musculus (Mouse) protein is Alpha-enolase (Eno1).